Reading from the N-terminus, the 348-residue chain is Short-wave-sensitive opsin 1 (348 aa).

Over 1–33 (MRKMSEEEFYLFKNISSVGPWDGPQYHIAPVWA) the chain is Extracellular. A glycan (N-linked (GlcNAc...) asparagine) is linked at N14. A helical transmembrane segment spans residues 34-58 (FYLQAAFMGTVFLIGFPLNAMVLVA). At 59-70 (TLRYKKLRQPLN) the chain is on the cytoplasmic side. Residues 71 to 96 (YILVNVSFGGFLLCIFSVFPVFVASC) form a helical membrane-spanning segment. Residues 97–110 (NGYFVFGRHVCALE) are Extracellular-facing. C107 and C184 form a disulfide bridge. A helical transmembrane segment spans residues 111 to 130 (GFLGTVAGLVTGWSLAFLAF). At 131–149 (ERYIVICKPFGNFRFSSKH) the chain is on the cytoplasmic side. The chain crosses the membrane as a helical span at residues 150–173 (ALTVVLATWTIGIGVSIPPFFGWS). The Extracellular segment spans residues 174–199 (RFIPEGLQCSCGPDWYTVGTKYRSES). Residues 200–227 (YTWFLFIFCFIVPLSLICFSYTQLLRAL) traverse the membrane as a helical segment. Residues 228–249 (KAVAAQQQESATTQKAEREVSR) lie on the Cytoplasmic side of the membrane. Residues 250 to 273 (MVVVMVGSFCVCYVPYAAFAMYMV) traverse the membrane as a helical segment. Topologically, residues 274 to 281 (NNRNHGLD) are extracellular. Residues 282–306 (LRLVTIPSFFSKSACIYNPIIYCFM) traverse the membrane as a helical segment. Residue K293 is modified to N6-(retinylidene)lysine. The Cytoplasmic portion of the chain corresponds to 307–348 (NKQFQACIMKMVCGKAMTDESDTCSSQKTEVSTVSSTQVGPN).

The protein belongs to the G-protein coupled receptor 1 family. Opsin subfamily. In terms of processing, phosphorylated on some or all of the serine and threonine residues present in the C-terminal region.

It is found in the cell membrane. It localises to the photoreceptor inner segment. The protein localises to the cell projection. Its subcellular location is the cilium. The protein resides in the photoreceptor outer segment. It is found in the cytoplasm. It localises to the perinuclear region. In terms of biological role, visual pigments are the light-absorbing molecules that mediate vision. They consist of an apoprotein, opsin, covalently linked to cis-retinal. Required for the maintenance of cone outer segment organization in the ventral retina, but not essential for the maintenance of functioning cone photoreceptors. Involved in ensuring correct abundance and localization of retinal membrane proteins. May increase spectral sensitivity in dim light. This Pan paniscus (Pygmy chimpanzee) protein is Short-wave-sensitive opsin 1 (OPN1SW).